A 212-amino-acid polypeptide reads, in one-letter code: Ribosomal RNA small subunit methyltransferase G (212 aa).

Residues Gly73, Ile127–Glu128, and Arg143 contribute to the S-adenosyl-L-methionine site.

It belongs to the methyltransferase superfamily. RNA methyltransferase RsmG family.

The protein resides in the cytoplasm. The catalysed reaction is guanosine(527) in 16S rRNA + S-adenosyl-L-methionine = N(7)-methylguanosine(527) in 16S rRNA + S-adenosyl-L-homocysteine. Specifically methylates the N7 position of guanine in position 527 of 16S rRNA. In Methylobacterium nodulans (strain LMG 21967 / CNCM I-2342 / ORS 2060), this protein is Ribosomal RNA small subunit methyltransferase G.